A 605-amino-acid chain; its full sequence is Glucose oxidase (605 aa).

Positions M1 to A16 are cleaved as a signal peptide. 2 residues coordinate FAD: L51 and T52. N65 carries N-linked (GlcNAc...) asparagine glycosylation. E72 serves as a coordination point for FAD. The N-linked (GlcNAc...) asparagine glycan is linked to N111. FAD-binding residues include S125, N129, G130, and T132. N-linked (GlcNAc...) asparagine glycans are attached at residues N183 and N190. C186 and C228 are joined by a disulfide. V272 contacts FAD. N280, N377, N410, and N495 each carry an N-linked (GlcNAc...) asparagine glycan. Catalysis depends on H538, which acts as the Proton acceptor. O2 is bound by residues R559 and V560. 2 residues coordinate FAD: G571 and M583.

The protein belongs to the GMC oxidoreductase family. Homodimer. It depends on FAD as a cofactor. The N-linked sugar chains of the glucose oxidase contributed to the high solubility of the enzyme in water.

Its subcellular location is the secreted. It localises to the cell wall. The protein localises to the cytoplasm. The protein resides in the extracellular space. It is found in the extracellular matrix. It carries out the reaction beta-D-glucose + O2 = D-glucono-1,5-lactone + H2O2. In terms of biological role, glucose oxidase catalyzes the oxidation of beta-D-glucose to D-glucono-delta-lactone and hydrogen peroxide in the presence of molecular oxygen. D-glucono-delta-lactone is sequentially hydrolyzed by lactonase to D-gluconic acid, and the resulting hydrogen peroxide is hydrolyzed by catalase to oxygen and water. The activity shows high specificity to beta-D-glucose, with very low to no activity towards L-glucose, 2-deoxy-D-glucose, 3-deoxy-D-glucose, 4-deoxy-D-glucose, 5-deoxy-D-glucose, 6-deoxy-D-glucose, 3-O-methyl-D-glucose, 4-O-methyl-D-glucose, 6-O-methyl-D-glucose, 4,6-O-benzylidene-D-glucose, 5-thio-5-deoxy-D-glucose, D-mannose, D-allose, D-galactose, D-fructose, D-arabinose, D-xylose, trehalose, melibiose, L-mannomethylose, lactose, sucrose or 1,5-anhydro-D-glucitol. The chain is Glucose oxidase from Aspergillus niger.